A 190-amino-acid polypeptide reads, in one-letter code: B3 domain-containing protein At1g49475 (190 aa).

Positions 1–27 (MRNMHTNRRSPGPITSAATQRRLKPEP) are disordered. Residues 33–125 (KFIKIILLSR…CFRVVIFDVS (93 aa)) constitute a DNA-binding region (TF-B3).

Its subcellular location is the nucleus. The protein is B3 domain-containing protein At1g49475 of Arabidopsis thaliana (Mouse-ear cress).